A 122-amino-acid chain; its full sequence is NADH-quinone oxidoreductase subunit A (122 aa).

3 helical membrane passes run 10–30, 67–87, and 91–111; these read LIVF…LTIG, FALL…WAVV, and LGLF…IGLI.

This sequence belongs to the complex I subunit 3 family. In terms of assembly, NDH-1 is composed of 14 different subunits. Subunits NuoA, H, J, K, L, M, N constitute the membrane sector of the complex.

Its subcellular location is the cell membrane. The enzyme catalyses a quinone + NADH + 5 H(+)(in) = a quinol + NAD(+) + 4 H(+)(out). NDH-1 shuttles electrons from NADH, via FMN and iron-sulfur (Fe-S) centers, to quinones in the respiratory chain. The immediate electron acceptor for the enzyme in this species is believed to be a menaquinone. Couples the redox reaction to proton translocation (for every two electrons transferred, four hydrogen ions are translocated across the cytoplasmic membrane), and thus conserves the redox energy in a proton gradient. This is NADH-quinone oxidoreductase subunit A from Geobacillus thermodenitrificans (strain NG80-2).